The following is a 1244-amino-acid chain: ATP-dependent helicase/nuclease subunit A (1244 aa).

The region spanning 4–477 is the UvrD-like helicase ATP-binding domain; sequence TKWTEEQLSA…IQLYKNFRSR (474 aa). Position 25-32 (25-32) interacts with ATP; that stretch reads AAAGSGKT. Residues 517–811 enclose the UvrD-like helicase C-terminal domain; the sequence is KNVDDIIGGP…RIMSIHKSKG (295 aa).

The protein belongs to the helicase family. AddA subfamily. As to quaternary structure, heterodimer of AddA and AddB/RexB. Requires Mg(2+) as cofactor.

The enzyme catalyses Couples ATP hydrolysis with the unwinding of duplex DNA by translocating in the 3'-5' direction.. It carries out the reaction ATP + H2O = ADP + phosphate + H(+). Functionally, the heterodimer acts as both an ATP-dependent DNA helicase and an ATP-dependent, dual-direction single-stranded exonuclease. Recognizes the chi site generating a DNA molecule suitable for the initiation of homologous recombination. The AddA nuclease domain is required for chi fragment generation; this subunit has the helicase and 3' -&gt; 5' nuclease activities. The chain is ATP-dependent helicase/nuclease subunit A from Clostridium botulinum (strain Alaska E43 / Type E3).